The chain runs to 160 residues: Protein MGF 300-2R (160 aa).

Belongs to the asfivirus MGF 300 family.

Plays a role in virus cell tropism, and may be required for efficient virus replication in macrophages. The polypeptide is Protein MGF 300-2R (Ornithodoros (relapsing fever ticks)).